The chain runs to 888 residues: Rab GTPase-activating protein eat-17 (888 aa).

Residues 41-60 (RSNSNSTSSPRNSPSQLSPP) show a composition bias toward low complexity. Disordered regions lie at residues 41–87 (RSNS…CETG) and 104–135 (LNKSNEEDSRSVASKKTGSSESRKGAREHSPE). Residues 114 to 123 (SVASKKTGSS) are compositionally biased toward polar residues. Residues 124 to 133 (ESRKGAREHS) are compositionally biased toward basic and acidic residues. A Rab-GAP TBC domain is found at 173–357 (GIPQHFRMIA…RIMDCFLVEG (185 aa)). The interval 631 to 654 (ASIEKESTSEAHSTQQQPSPPLTS) is disordered. Residues 694 to 770 (EADTLAELKE…ESEFNEGRIN (77 aa)) are a coiled coil. The disordered stretch occupies residues 854–888 (LAEEGSATETDELRPKELNDGNDTTDSGVQLSDSH). The span at 874–888 (GNDTTDSGVQLSDSH) shows a compositional bias: polar residues.

May interact with rab-6.2 (in GTP-bound form). As to expression, highly expressed in the terminal bulb muscles, pharyngeal muscle, in intestine and vulva.

In terms of biological role, rab GTPase activating protein for the small GTPase rab-6.2. Required for grinder formation, which is the feeding organ that breaks down food. The protein is Rab GTPase-activating protein eat-17 of Caenorhabditis elegans.